Reading from the N-terminus, the 116-residue chain is Venom protein 54.1 (116 aa).

An N-terminal signal peptide occupies residues 1 to 19 (MNFQVFSLIFFNFVYYCSC).

In terms of processing, contains 3 disulfide bonds. In terms of tissue distribution, expressed by the venom gland.

The protein resides in the secreted. The chain is Venom protein 54.1 from Lychas mucronatus (Chinese swimming scorpion).